Here is a 109-residue protein sequence, read N- to C-terminus: Nucleoid-associated protein VV1_2004 (109 aa).

The protein belongs to the YbaB/EbfC family. As to quaternary structure, homodimer.

The protein resides in the cytoplasm. It localises to the nucleoid. Binds to DNA and alters its conformation. May be involved in regulation of gene expression, nucleoid organization and DNA protection. The protein is Nucleoid-associated protein VV1_2004 of Vibrio vulnificus (strain CMCP6).